A 530-amino-acid polypeptide reads, in one-letter code: Dual specificity calcium/calmodulin-dependent 3',5'-cyclic nucleotide phosphodiesterase 1A (530 aa).

2 calmodulin-binding regions span residues threonine 24–lysine 44 and glutamate 114–lysine 137. The PDEase domain maps to valine 142–glycine 508. Residue histidine 219 is the Proton donor of the active site. Positions 223, 259, 260, and 366 each coordinate Zn(2+). Aspartate 260 is a binding site for Mg(2+). 2 disordered regions span residues threonine 450–threonine 471 and lysine 502–serine 530. Residues lysine 451–threonine 471 are compositionally biased toward polar residues. Positions proline 510 to serine 530 are enriched in basic and acidic residues.

This sequence belongs to the cyclic nucleotide phosphodiesterase family. PDE1 subfamily. In terms of assembly, homodimer. Interacts with YWHAZ. Requires Zn(2+) as cofactor. Mg(2+) serves as cofactor.

The catalysed reaction is a nucleoside 3',5'-cyclic phosphate + H2O = a nucleoside 5'-phosphate + H(+). The enzyme catalyses 3',5'-cyclic GMP + H2O = GMP + H(+). It carries out the reaction 3',5'-cyclic AMP + H2O = AMP + H(+). Type I PDE are activated by the binding of calmodulin in the presence of Ca(2+). Functionally, calcium/calmodulin-dependent cyclic nucleotide phosphodiesterase with a dual specificity for the second messengers cGMP and cAMP, which are key regulators of many important physiological processes. Has a higher efficiency with cGMP compared to cAMP. This chain is Dual specificity calcium/calmodulin-dependent 3',5'-cyclic nucleotide phosphodiesterase 1A, found in Bos taurus (Bovine).